A 617-amino-acid polypeptide reads, in one-letter code: COMPASS component cclA (617 aa).

Low complexity-rich tracts occupy residues 1-19 (MASI…INSP) and 40-50 (SSPAPASNASA). The interval 1–89 (MASIQPAGSS…AKKRATAVQN (89 aa)) is disordered. A compositionally biased stretch (basic residues) spans 57-69 (SKRNKRDSRKKRE). Residues 157 to 380 (IADTSFPHIK…YAFNLKETPT (224 aa)) form the B30.2/SPRY domain. The segment at 595–617 (TPNTEEPAARPENITVGHDVEMS) is disordered.

Belongs to the cclA family. Component of the COMPASS complex.

The protein localises to the nucleus. It localises to the chromosome. Its subcellular location is the telomere. Component of the COMPASS (Set1C) complex that specifically mono-, di- and trimethylates histone H3 to form H3K4me1/2/3, which subsequently plays a role in telomere length maintenance and transcription elongation regulation. Controls the production of several secondary metabolites, including astellolides. The polypeptide is COMPASS component cclA (Aspergillus oryzae (strain ATCC 42149 / RIB 40) (Yellow koji mold)).